We begin with the raw amino-acid sequence, 361 residues long: Chorismate synthase (361 aa).

Positions 48 and 54 each coordinate NADP(+). FMN is bound by residues 125–127 (RSS), 238–239 (NA), G278, 293–297 (KPTSS), and R319.

The protein belongs to the chorismate synthase family. As to quaternary structure, homotetramer. FMNH2 is required as a cofactor.

The catalysed reaction is 5-O-(1-carboxyvinyl)-3-phosphoshikimate = chorismate + phosphate. It participates in metabolic intermediate biosynthesis; chorismate biosynthesis; chorismate from D-erythrose 4-phosphate and phosphoenolpyruvate: step 7/7. In terms of biological role, catalyzes the anti-1,4-elimination of the C-3 phosphate and the C-6 proR hydrogen from 5-enolpyruvylshikimate-3-phosphate (EPSP) to yield chorismate, which is the branch point compound that serves as the starting substrate for the three terminal pathways of aromatic amino acid biosynthesis. This reaction introduces a second double bond into the aromatic ring system. The protein is Chorismate synthase of Vibrio campbellii (strain ATCC BAA-1116).